Consider the following 333-residue polypeptide: Adenosine deaminase (333 aa).

His-12 and His-14 together coordinate Zn(2+). Positions 14, 16, and 170 each coordinate substrate. His-197 contributes to the Zn(2+) binding site. Glu-200 functions as the Proton donor in the catalytic mechanism. Asp-278 provides a ligand contact to Zn(2+). Position 279 (Asp-279) interacts with substrate.

This sequence belongs to the metallo-dependent hydrolases superfamily. Adenosine and AMP deaminases family. Adenosine deaminase subfamily. Zn(2+) is required as a cofactor.

The catalysed reaction is adenosine + H2O + H(+) = inosine + NH4(+). It catalyses the reaction 2'-deoxyadenosine + H2O + H(+) = 2'-deoxyinosine + NH4(+). Catalyzes the hydrolytic deamination of adenosine and 2-deoxyadenosine. This chain is Adenosine deaminase, found in Salmonella paratyphi C (strain RKS4594).